A 231-amino-acid polypeptide reads, in one-letter code: Sporulation protein RMD6 (231 aa).

It localises to the peroxisome. Required for sporulation. Required for meiotic nuclear division. The protein is Sporulation protein RMD6 (RMD6) of Saccharomyces cerevisiae (strain ATCC 204508 / S288c) (Baker's yeast).